The following is a 161-amino-acid chain: Endoribonuclease YbeY (161 aa).

Residues histidine 121, histidine 125, and histidine 131 each coordinate Zn(2+).

The protein belongs to the endoribonuclease YbeY family. The cofactor is Zn(2+).

It localises to the cytoplasm. In terms of biological role, single strand-specific metallo-endoribonuclease involved in late-stage 70S ribosome quality control and in maturation of the 3' terminus of the 16S rRNA. The sequence is that of Endoribonuclease YbeY from Stenotrophomonas maltophilia (strain R551-3).